The chain runs to 159 residues: Large ribosomal subunit protein uL13 (159 aa).

This sequence belongs to the universal ribosomal protein uL13 family. In terms of assembly, part of the 50S ribosomal subunit.

This protein is one of the early assembly proteins of the 50S ribosomal subunit, although it is not seen to bind rRNA by itself. It is important during the early stages of 50S assembly. This Methanopyrus kandleri (strain AV19 / DSM 6324 / JCM 9639 / NBRC 100938) protein is Large ribosomal subunit protein uL13.